The sequence spans 221 residues: Ribonuclease 3 (221 aa).

The RNase III domain maps to 1–123; that stretch reads MERTGHAFAD…LIAVLYLDGG (123 aa). Position 36 (E36) interacts with Mg(2+). D40 is a catalytic residue. Residues D109 and E112 each contribute to the Mg(2+) site. The active site involves E112. In terms of domain architecture, DRBM spans 148–217; the sequence is DAKTELQEWA…AAALLLREGV (70 aa).

It belongs to the ribonuclease III family. Homodimer. Requires Mg(2+) as cofactor.

It localises to the cytoplasm. The enzyme catalyses Endonucleolytic cleavage to 5'-phosphomonoester.. Its function is as follows. Digests double-stranded RNA. Involved in the processing of primary rRNA transcript to yield the immediate precursors to the large and small rRNAs (23S and 16S). Processes some mRNAs, and tRNAs when they are encoded in the rRNA operon. Processes pre-crRNA and tracrRNA of type II CRISPR loci if present in the organism. The sequence is that of Ribonuclease 3 from Mesorhizobium japonicum (strain LMG 29417 / CECT 9101 / MAFF 303099) (Mesorhizobium loti (strain MAFF 303099)).